The primary structure comprises 360 residues: Probable dual-specificity RNA methyltransferase RlmN (360 aa).

The active-site Proton acceptor is the Glu91. One can recognise a Radical SAM core domain in the interval 97-335; the sequence is QHYGQSVCVT…CVVRQEHGTD (239 aa). A disulfide bridge connects residues Cys104 and Cys340. The [4Fe-4S] cluster site is built by Cys111, Cys115, and Cys118. Residues 163-164, Ser195, 218-220, and Asn296 each bind S-adenosyl-L-methionine; these read GE and SLH. Cys340 (S-methylcysteine intermediate) is an active-site residue.

It belongs to the radical SAM superfamily. RlmN family. Requires [4Fe-4S] cluster as cofactor.

The protein resides in the cytoplasm. The enzyme catalyses adenosine(2503) in 23S rRNA + 2 reduced [2Fe-2S]-[ferredoxin] + 2 S-adenosyl-L-methionine = 2-methyladenosine(2503) in 23S rRNA + 5'-deoxyadenosine + L-methionine + 2 oxidized [2Fe-2S]-[ferredoxin] + S-adenosyl-L-homocysteine. It carries out the reaction adenosine(37) in tRNA + 2 reduced [2Fe-2S]-[ferredoxin] + 2 S-adenosyl-L-methionine = 2-methyladenosine(37) in tRNA + 5'-deoxyadenosine + L-methionine + 2 oxidized [2Fe-2S]-[ferredoxin] + S-adenosyl-L-homocysteine. Functionally, specifically methylates position 2 of adenine 2503 in 23S rRNA and position 2 of adenine 37 in tRNAs. In Streptococcus equi subsp. zooepidemicus (strain MGCS10565), this protein is Probable dual-specificity RNA methyltransferase RlmN.